The following is a 268-amino-acid chain: MASSKSDPFQSIFAFKPHRKRHNFIFLHGFGSEYSSFKHVFKLFEKKRWSFFAFNFPGHGNNQSNSVDELKLKHYVELVCDFIIQKRLKKVVLVGHSMGGAIAVLVNAVLRERIKALVLVAPMNQTSFVVSKKRILDTLFTRSPKNQQDFIEHTDDKKSIVNFFVGAFKKRVNFKTLYSDMVQNAKYGNDYLEAGYNAIKDKPTLVVLGSNDIVTPTKASVEYLAKHSETIIFKIIDGVGHSPHYYAPKLFFDYIGEFLDNIKRNKDK.

Residue His-28 is part of the active site. The active-site Charge relay system is the His-96.

Belongs to the lipase/esterase LIP3/BchO family.

This chain is Putative esterase/lipase 2, found in Mycoplasma pneumoniae (strain ATCC 29342 / M129 / Subtype 1) (Mycoplasmoides pneumoniae).